An 833-amino-acid polypeptide reads, in one-letter code: MHWIKCLLTAFICFTVIVQVHSSGSFELRLKYFSNDHGRDNEGRCCSGESDGATGKCLGSCKTRFRVCLKHYQATIDTTSQCTYGDVITPILGENSVNLTDAQRFQNKGFTNPIQFPFSFSWPGTFSLIVEAWHDTNNSGNARTNKLLIQRLLVQQVLEVSSEWKTNKSESQYTSLEYDFRVTCDLNYYGSGCAKFCRPRDDSFGHSTCSETGEIICLTGWQGDYCHIPKCAKGCEHGHCDKPNQCVCQLGWKGALCNECVLEPNCIHGTCNKPWTCICNEGWGGLYCNQDLNYCTNHRPCKNGGTCFNTGEGLYTCKCAPGYSGDDCENEIYSCDADVNPCQNGGTCIDEPHTKTGYKCHCANGWSGKMCEEKVLTCSDKPCHQGICRNVRPGLGSKGQGYQCECPIGYSGPNCDLQLDNCSPNPCINGGSCQPSGKCICPAGFSGTRCETNIDDCLGHQCENGGTCIDMVNQYRCQCVPGFHGTHCSSKVDLCLIRPCANGGTCLNLNNDYQCTCRAGFTGKDCSVDIDECSSGPCHNGGTCMNRVNSFECVCANGFRGKQCDEESYDSVTFDAHQYGATTQARADGLTNAQVVLIAVFSVAMPLVAVIAACVVFCMKRKRKRAQEKDDAEARKQNEQNAVATMHHNGSGVGVALASASLGGKTGSNSGLTFDGGNPNIIKNTWDKSVNNICASAAAAAAAAAAADECLMYGGYVASVADNNNANSDFCVAPLQRAKSQKQLNTDPTLMHRGSPAGSSAKGASGGGPGAAEGKRISVLGEGSYCSQRWPSLAAAGVAGACSSQLMAAASVAGSGAGTAQQQRSVVCGTPHM.

Residues 1-18 form the signal peptide; sequence MHWIKCLLTAFICFTVIV. Residues 19-594 are Extracellular-facing; the sequence is QVHSSGSFEL…ARADGLTNAQ (576 aa). Intrachain disulfides connect C46/C61 and C68/C82. N-linked (GlcNAc...) asparagine glycans are attached at residues N98, N137, and N167. In terms of domain architecture, DSL spans 182–226; the sequence is VTCDLNYYGSGCAKFCRPRDDSFGHSTCSETGEIICLTGWQGDYC. 30 disulfide bridges follow: C184/C193, C197/C209, C217/C226, C231/C240, C235/C246, C248/C257, C260/C271, C266/C277, C279/C288, C295/C307, C301/C317, C319/C328, C335/C348, C342/C360, C362/C371, C378/C388, C383/C404, C406/C415, C422/C433, C427/C439, C441/C450, C457/C468, C462/C477, C479/C488, C495/C506, C500/C515, C517/C526, C533/C544, C538/C553, and C555/C564. EGF-like domains lie at 227-258, 256-289, 291-329, 331-372, 374-416, and 418-451; these read HIPK…ALCN, LCNE…LYCN, DLNY…DDCE, EIYS…KMCE, KVLT…PNCD, and QLDN…TRCE. The EGF-like 7; calcium-binding domain occupies 453–489; sequence NIDDCLGHQCENGGTCIDMVNQYRCQCVPGFHGTHCS. The EGF-like 8 domain maps to 491-527; that stretch reads KVDLCLIRPCANGGTCLNLNNDYQCTCRAGFTGKDCS. One can recognise an EGF-like 9; calcium-binding domain in the interval 529–565; sequence DIDECSSGPCHNGGTCMNRVNSFECVCANGFRGKQCD. Residues 595–617 form a helical membrane-spanning segment; it reads VVLIAVFSVAMPLVAVIAACVVF. Residues 618–833 are Cytoplasmic-facing; the sequence is CMKRKRKRAQ…RSVVCGTPHM (216 aa). A Phosphothreonine modification is found at T666. Positions 743 to 773 are disordered; the sequence is QLNTDPTLMHRGSPAGSSAKGASGGGPGAAE. Positions 754-763 are enriched in low complexity; it reads GSPAGSSAKG.

In terms of assembly, interacts with Notch (N) via the EGF repeats and the N EGF repeats. Post-translationally, ubiquitinated by Mib, leading to its endocytosis and subsequent degradation. In terms of tissue distribution, detected in all areas with neurogenic abilities, for example the neurogenic ectoderm and the primordia of the sense organs. Later expression is restricted to those cells that have adopted a neural fate.

The protein resides in the membrane. Acts as a ligand for Notch (N) receptor. Essential for proper differentiation of ectoderm. Delta is required for the correct separation of neural and epidermal cell lineages. Fringe (fng) acts in the Golgi to determine the type of O-linked fucose on the EGF modules in N, altering the ability of N to bind with Delta. O-fut1 also has a role in modulating the interaction. This Drosophila melanogaster (Fruit fly) protein is Neurogenic locus protein delta.